The primary structure comprises 1145 residues: Protein sumv-2 (1145 aa).

Basic residues predominate over residues 1-13 (MKPGRKSLPKKNR). Disordered stretches follow at residues 1-310 (MKPG…APPA), 429-464 (QSRT…QKAR), 999-1025 (HSAS…AGSE), 1040-1059 (QIAA…PRTE), and 1073-1145 (ITTG…ISLI). Over residues 14–34 (ASNITEKMPTTSTEAQSSSSK) the composition is skewed to polar residues. 2 stretches are compositionally biased toward basic and acidic residues: residues 73-104 (KTTE…EPRK) and 216-225 (VPEKKPKIED). Over residues 226-248 (APTTSSPKKSTPTSAPPTRASAR) the composition is skewed to low complexity. Over residues 455 to 464 (GDEKRQQKAR) the composition is skewed to basic and acidic residues. Residues 999 to 1013 (HSASSSAAPSPVGAS) are compositionally biased toward low complexity. The span at 1091 to 1102 (VIERGDFRDHRP) shows a compositional bias: basic and acidic residues. Pro residues predominate over residues 1121–1136 (QQPPLPSPAPPPPRGP).

Functionally, influences the activity of genes involved in vulval development. The sequence is that of Protein sumv-2 from Caenorhabditis elegans.